Here is a 598-residue protein sequence, read N- to C-terminus: Acetylcholine receptor subunit alpha-type acr-5 (598 aa).

The N-terminal stretch at 1-16 is a signal peptide; it reads MLPNIILILLIRYCSC. Residues 17-323 lie on the Extracellular side of the membrane; that stretch reads GAGSRVYEKY…HLVIRRKPLY (307 aa). Asparagine 54, asparagine 71, asparagine 77, asparagine 134, asparagine 178, and asparagine 252 each carry an N-linked (GlcNAc...) asparagine glycan. A helical transmembrane segment spans residues 324-344; it reads YMINLVVPTSIITIVAVTGFF. At 345-356 the chain is on the cytoplasmic side; sequence TPTSSSSERDEK. The chain crosses the membrane as a helical span at residues 357–377; sequence LYLGINTLLTMSVMMLMVCNQ. Over 378–391 the chain is Extracellular; it reads MPSTSTYVPLMSWY. A helical transmembrane segment spans residues 392–412; sequence YIGIIMVIVVGTFLATGVLAI. The Cytoplasmic portion of the chain corresponds to 413-563; sequence HGQKHYNKPI…WEFLANVLDR (151 aa). Residues 564–584 traverse the membrane as a helical segment; the sequence is ILLTIFCGFTFAVFIILIGFD. The Extracellular segment spans residues 585–598; it reads SFFTFHTDSPPKTM.

It belongs to the ligand-gated ion channel (TC 1.A.9) family. Acetylcholine receptor (TC 1.A.9.1) subfamily.

It is found in the postsynaptic cell membrane. The protein resides in the cell membrane. Functionally, subunit of nicotinic acetylcholine receptor (nAChR). Involved in nAChR sensitivity to nicotine. Modulates locomotion towards the drug nicotine. This Caenorhabditis elegans protein is Acetylcholine receptor subunit alpha-type acr-5.